A 232-amino-acid polypeptide reads, in one-letter code: 6-phosphogluconolactonase (232 aa).

It belongs to the glucosamine/galactosamine-6-phosphate isomerase family. 6-phosphogluconolactonase subfamily.

The enzyme catalyses 6-phospho-D-glucono-1,5-lactone + H2O = 6-phospho-D-gluconate + H(+). The protein operates within carbohydrate degradation; pentose phosphate pathway; D-ribulose 5-phosphate from D-glucose 6-phosphate (oxidative stage): step 2/3. In terms of biological role, hydrolysis of 6-phosphogluconolactone to 6-phosphogluconate. The polypeptide is 6-phosphogluconolactonase (pgl) (Caulobacter vibrioides (strain ATCC 19089 / CIP 103742 / CB 15) (Caulobacter crescentus)).